Here is a 189-residue protein sequence, read N- to C-terminus: Interferon alpha-5 (189 aa).

The N-terminal stretch at 1-23 is a signal peptide; that stretch reads MARLCAFLMVLPVLSYWPTCSLG. 2 cysteine pairs are disulfide-bonded: cysteine 24-cysteine 122 and cysteine 52-cysteine 162. The N-linked (GlcNAc...) asparagine glycan is linked to asparagine 101.

It belongs to the alpha/beta interferon family.

The protein resides in the secreted. Functionally, produced by macrophages, IFN-alpha have antiviral activities. Interferon stimulates the production of two enzymes: a protein kinase and an oligoadenylate synthetase. The protein is Interferon alpha-5 (Ifna5) of Mus musculus (Mouse).